The sequence spans 371 residues: MGHKVVVFDISVIRALWETRVKKHKAWQKKEVERLEKSALEKIKEEWNFVAECRRKGIPQAVYCKNGFIDTSVRLLDKIERNTLTRQSSLPKDRGKRSSAFVFELSGEHWTELPDSLKEQTHLREWYISNTLIQIIPTYIQLFQAMRILDLPKNQISHLPAEIGCLKNLKELNVGFNYLKSIPPELGDCENLERLDCSGNLELMELPFELSNLKQVTFVDISANKFSSVPICVLRMSNLQWLDISSNNLTDLPQDIDRLEELQSFLLYKNKLTYLPYSMLNLKKLTLLVVSGDHLVELPTALCDSSTPLKFVSLMDNPIDNAQCEDGNEIMESERDRQHFDKEVMKAYIEDLKERESVPSYTTKVSFSLQL.

LRR repeat units follow at residues 122–143, 145–166, 168–189, 191–214, 215–235, 238–260, 261–283, 284–305, and 308–329; these read HLREWYISNTLIQIIPTYIQLF, AMRILDLPKNQISHLPAEIGCL, NLKELNVGFNYLKSIPPELGDC, NLERLDCSGNLELMELPFELSNLK, QVTFVDISANKFSSVPICVLR, NLQWLDISSNNLTDLPQDIDRLE, ELQSFLLYKNKLTYLPYSMLNLK, KLTLLVVSGDHLVELPTALCDS, and PLKFVSLMDNPIDNAQCEDGNE.

The chain is Leucine-rich repeat-containing protein 2 (LRRC2) from Homo sapiens (Human).